The chain runs to 242 residues: Ribosomal RNA small subunit methyltransferase G (242 aa).

S-adenosyl-L-methionine contacts are provided by residues Gly-78, Phe-83, 129-130 (AE), and Arg-148.

Belongs to the methyltransferase superfamily. RNA methyltransferase RsmG family.

The protein resides in the cytoplasm. In terms of biological role, specifically methylates the N7 position of a guanine in 16S rRNA. The chain is Ribosomal RNA small subunit methyltransferase G from Lachnoclostridium phytofermentans (strain ATCC 700394 / DSM 18823 / ISDg) (Clostridium phytofermentans).